The primary structure comprises 180 residues: Large ribosomal subunit protein uL5 (180 aa).

Belongs to the universal ribosomal protein uL5 family. In terms of assembly, part of the 50S ribosomal subunit; part of the 5S rRNA/L5/L18/L25 subcomplex. Contacts the 5S rRNA and the P site tRNA. Forms a bridge to the 30S subunit in the 70S ribosome.

Its function is as follows. This is one of the proteins that bind and probably mediate the attachment of the 5S RNA into the large ribosomal subunit, where it forms part of the central protuberance. In the 70S ribosome it contacts protein S13 of the 30S subunit (bridge B1b), connecting the 2 subunits; this bridge is implicated in subunit movement. Contacts the P site tRNA; the 5S rRNA and some of its associated proteins might help stabilize positioning of ribosome-bound tRNAs. This is Large ribosomal subunit protein uL5 from Streptococcus pneumoniae (strain JJA).